The following is a 124-amino-acid chain: Type-4 ice-structuring protein (124 aa).

A signal peptide spans 1-20; sequence MKFSLIAAVALLALAQGSFA. Gln-21 is modified (pyrrolidone carboxylic acid).

This sequence belongs to the apolipoprotein A1/A4/E family.

The protein localises to the secreted. Its function is as follows. Antifreeze proteins lower the blood freezing point. The chain is Type-4 ice-structuring protein from Paralichthys olivaceus (Bastard halibut).